The chain runs to 572 residues: Proline--tRNA ligase (572 aa).

This sequence belongs to the class-II aminoacyl-tRNA synthetase family. ProS type 1 subfamily. As to quaternary structure, homodimer.

The protein localises to the cytoplasm. It catalyses the reaction tRNA(Pro) + L-proline + ATP = L-prolyl-tRNA(Pro) + AMP + diphosphate. In terms of biological role, catalyzes the attachment of proline to tRNA(Pro) in a two-step reaction: proline is first activated by ATP to form Pro-AMP and then transferred to the acceptor end of tRNA(Pro). As ProRS can inadvertently accommodate and process non-cognate amino acids such as alanine and cysteine, to avoid such errors it has two additional distinct editing activities against alanine. One activity is designated as 'pretransfer' editing and involves the tRNA(Pro)-independent hydrolysis of activated Ala-AMP. The other activity is designated 'posttransfer' editing and involves deacylation of mischarged Ala-tRNA(Pro). The misacylated Cys-tRNA(Pro) is not edited by ProRS. The sequence is that of Proline--tRNA ligase from Buchnera aphidicola subsp. Acyrthosiphon pisum (strain APS) (Acyrthosiphon pisum symbiotic bacterium).